Reading from the N-terminus, the 126-residue chain is L-alanine exporter AlaE (126 aa).

Residues 23-43 form a helical membrane-spanning segment; sequence FALVVYCFFTGMAIEILLSGM.

Belongs to the AlaE exporter family.

The protein resides in the cell inner membrane. In terms of biological role, exports L-alanine. The protein is L-alanine exporter AlaE of Sodalis glossinidius (strain morsitans).